The chain runs to 188 residues: Elongation factor P (188 aa).

Residue Lys-34 is modified to N6-(3,6-diaminohexanoyl)-5-hydroxylysine.

Belongs to the elongation factor P family. May be beta-lysylated on the epsilon-amino group of Lys-34 by the combined action of EpmA and EpmB, and then hydroxylated on the C5 position of the same residue by EpmC (if this protein is present). Lysylation is critical for the stimulatory effect of EF-P on peptide-bond formation. The lysylation moiety may extend toward the peptidyltransferase center and stabilize the terminal 3-CCA end of the tRNA. Hydroxylation of the C5 position on Lys-34 may allow additional potential stabilizing hydrogen-bond interactions with the P-tRNA.

It is found in the cytoplasm. Its pathway is protein biosynthesis; polypeptide chain elongation. Functionally, involved in peptide bond synthesis. Alleviates ribosome stalling that occurs when 3 or more consecutive Pro residues or the sequence PPG is present in a protein, possibly by augmenting the peptidyl transferase activity of the ribosome. Modification of Lys-34 is required for alleviation. The polypeptide is Elongation factor P (Vibrio parahaemolyticus serotype O3:K6 (strain RIMD 2210633)).